The following is an 85-amino-acid chain: N.vectensis toxin 1 6 (85 aa).

The N-terminal stretch at Met-1 to Ala-20 is a signal peptide. Residues Arg-21–Ser-36 constitute a propeptide that is removed on maturation. 3 cysteine pairs are disulfide-bonded: Cys-42-Cys-82, Cys-44-Cys-72, and Cys-65-Cys-83.

Belongs to the sea anemone sodium channel inhibitory toxin family. Type II subfamily. In terms of tissue distribution, expressed in ectodermal glands and in clumps outside of the extodermal layer. Is not expressed in nematocytes. In adult female tissues, shows similar expression levels in mesenteries (gametes-producing tissue), tentacles, pharynx and physa.

It is found in the secreted. Functionally, binds to site 3 of voltage-gated sodium channels and inhibits the inactivation process. Is highly active on DmNav1/TipE (drosophila) and is only extremely weakly active on rat Nav1.4-beta-1/SCN4A-SCN1B, and on human Nav1.5-beta-1/SCN5A-beta-1. This reveals high specificity for arthropod over mammalian channels. In vivo, when released into the medium, this recombinant toxin induces impaired swimming, paralysis and death of the crustacean A.nauplii within several hours. Also causes paralysis of cherry shrimps immediately after injection at very low doses. Its effect on zebrafish (D.rerio) larvae is also rapid, since it induces tail twitching accompanied by impaired swimming after 20 minutes and complete paralysis within 45 minutes. It has also been observed to cause death of zebrafish larvae within 1 hour. The polypeptide is N.vectensis toxin 1 6 (Nematostella vectensis (Starlet sea anemone)).